A 228-amino-acid polypeptide reads, in one-letter code: Cytochrome c oxidase subunit 2 (228 aa).

Residues Met-1 to Ser-14 lie on the Mitochondrial intermembrane side of the membrane. The helical transmembrane segment at Pro-15–Met-45 threads the bilayer. Residues Leu-46–Gln-58 are Mitochondrial matrix-facing. A helical transmembrane segment spans residues Glu-59–Met-86. Over Asp-87–Ser-228 the chain is Mitochondrial intermembrane. Cu cation contacts are provided by His-160, Cys-195, Glu-197, Cys-199, His-203, and Met-206. Glu-197 contacts Mg(2+).

This sequence belongs to the cytochrome c oxidase subunit 2 family. As to quaternary structure, component of the cytochrome c oxidase (complex IV, CIV), a multisubunit enzyme composed of 14 subunits. The complex is composed of a catalytic core of 3 subunits MT-CO1, MT-CO2 and MT-CO3, encoded in the mitochondrial DNA, and 11 supernumerary subunits COX4I, COX5A, COX5B, COX6A, COX6B, COX6C, COX7A, COX7B, COX7C, COX8 and NDUFA4, which are encoded in the nuclear genome. The complex exists as a monomer or a dimer and forms supercomplexes (SCs) in the inner mitochondrial membrane with NADH-ubiquinone oxidoreductase (complex I, CI) and ubiquinol-cytochrome c oxidoreductase (cytochrome b-c1 complex, complex III, CIII), resulting in different assemblies (supercomplex SCI(1)III(2)IV(1) and megacomplex MCI(2)III(2)IV(2)). Found in a complex with TMEM177, COA6, COX18, COX20, SCO1 and SCO2. Interacts with TMEM177 in a COX20-dependent manner. Interacts with COX20. Interacts with COX16. Requires Cu cation as cofactor.

It is found in the mitochondrion inner membrane. The catalysed reaction is 4 Fe(II)-[cytochrome c] + O2 + 8 H(+)(in) = 4 Fe(III)-[cytochrome c] + 2 H2O + 4 H(+)(out). Component of the cytochrome c oxidase, the last enzyme in the mitochondrial electron transport chain which drives oxidative phosphorylation. The respiratory chain contains 3 multisubunit complexes succinate dehydrogenase (complex II, CII), ubiquinol-cytochrome c oxidoreductase (cytochrome b-c1 complex, complex III, CIII) and cytochrome c oxidase (complex IV, CIV), that cooperate to transfer electrons derived from NADH and succinate to molecular oxygen, creating an electrochemical gradient over the inner membrane that drives transmembrane transport and the ATP synthase. Cytochrome c oxidase is the component of the respiratory chain that catalyzes the reduction of oxygen to water. Electrons originating from reduced cytochrome c in the intermembrane space (IMS) are transferred via the dinuclear copper A center (CU(A)) of subunit 2 and heme A of subunit 1 to the active site in subunit 1, a binuclear center (BNC) formed by heme A3 and copper B (CU(B)). The BNC reduces molecular oxygen to 2 water molecules using 4 electrons from cytochrome c in the IMS and 4 protons from the mitochondrial matrix. The chain is Cytochrome c oxidase subunit 2 (MT-CO2) from Cairina moschata (Muscovy duck).